Consider the following 199-residue polypeptide: MVKIGVCGPVGSGKTALIEALTRHMSKDYDMAVITNDIYTKEDAEFMCKNSVMPRDRIIGVETGGCPHTAIREDASMNLEAVEEMHGRFPNLELLLIESGGDNLSATFNPELADFTIFVIDVAEGDKIPRKGGPGITRSDLLVINKIDLAPYVGADLKVMERDSKKMRGEKPFIFTNIRAKEGLDDVIAWIKRNALLED.

8–15 provides a ligand contact to GTP; the sequence is GPVGSGKT.

It belongs to the SIMIBI class G3E GTPase family. UreG subfamily. In terms of assembly, homodimer. UreH, UreF and UreG form a complex that acts as a GTP-hydrolysis-dependent molecular chaperone, activating the urease apoprotein by helping to assemble the nickel containing metallocenter of UreC. The UreE protein probably delivers the nickel.

The protein resides in the cytoplasm. Its function is as follows. Facilitates the functional incorporation of the urease nickel metallocenter. This process requires GTP hydrolysis, probably effectuated by UreG. This chain is Urease accessory protein UreG, found in Helicobacter pylori (strain J99 / ATCC 700824) (Campylobacter pylori J99).